Here is a 688-residue protein sequence, read N- to C-terminus: Potassium-transporting ATPase ATP-binding subunit (688 aa).

Helical transmembrane passes span 35 to 55, 62 to 82, 219 to 239, and 260 to 280; these read VMFV…AMLA, ALFT…ANFA, IALT…CVTL, and VLIA…LSAI. Asp-313 acts as the 4-aspartylphosphate intermediate in catalysis. ATP is bound by residues Asp-350, Glu-354, 383 to 390, and Lys-401; that span reads FSAMTRMS. Residues Asp-524 and Asp-528 each contribute to the Mg(2+) site. Helical transmembrane passes span 594-614, 622-642, and 667-687; these read FAII…LNIM, AVLS…PLAL, and GLIA…LLIL.

It belongs to the cation transport ATPase (P-type) (TC 3.A.3) family. Type IA subfamily. In terms of assembly, the system is composed of three essential subunits: KdpA, KdpB and KdpC.

The protein localises to the cell inner membrane. The enzyme catalyses K(+)(out) + ATP + H2O = K(+)(in) + ADP + phosphate + H(+). Its function is as follows. Part of the high-affinity ATP-driven potassium transport (or Kdp) system, which catalyzes the hydrolysis of ATP coupled with the electrogenic transport of potassium into the cytoplasm. This subunit is responsible for energy coupling to the transport system and for the release of the potassium ions to the cytoplasm. This Photorhabdus laumondii subsp. laumondii (strain DSM 15139 / CIP 105565 / TT01) (Photorhabdus luminescens subsp. laumondii) protein is Potassium-transporting ATPase ATP-binding subunit.